The primary structure comprises 807 residues: Microbial collagenase (807 aa).

Positions 1–27 (MSHLLPFPRRRLALACLLASISGASFG) are cleaved as a signal peptide. H434 serves as a coordination point for Zn(2+). Residue E435 is part of the active site. Residue H438 participates in Zn(2+) binding. Residues 562-585 (EVTPENPDTDPDTPTEPSDGVTQL) form a disordered region.

It belongs to the peptidase M9A family. Zn(2+) is required as a cofactor.

The protein resides in the secreted. The enzyme catalyses Digestion of native collagen in the triple helical region at Xaa-|-Gly bonds. With synthetic peptides, a preference is shown for Gly at P3 and P1', Pro and Ala at P2 and P2', and hydroxyproline, Ala or Arg at P3'.. In terms of biological role, possesses gelatinolytic activity. This is Microbial collagenase from Vibrio vulnificus (strain CMCP6).